The sequence spans 441 residues: MSEMTPREIVHELDAHIIGQQNAKRSVAVALRNRWRRMQLEPELRHEVTPKNILMIGPTGVGKTEIARRLAKLANAPFIKVEATKFTEVGYVGKEVEQIIRDLTDSAVKMTREQQMKKCRHRAEEMAEERILDALLPKPKDDWDTDQKDDSTTRQVFRKKLREGQLDDKEIEIDVAAPQVGVEIMAPPGMEEMTNQLQGLFQNLGQSTSKRKKLKIKDAYKQLVEDEAAKLVNQEDLKEQAIELVEQNGIVFLDEIDKICKRGESSGPDVSREGVQRDLLPLVEGCTVSTKHGMVKTDHILFIASGAFQMSKPSDLIPELQGRLPIRVELDALTAADFKRILTEPFASLTEQHVALMNTEGVTIEFTESGIERIAEAAWQVNERTENIGARRLHTVMEKLMEEISYDASEKSGSKFVIDAEYVNDHLDTLVQDEDLSRFIL.

ATP-binding positions include I18, 60-65, D254, E319, and R391; that span reads GVGKTE.

The protein belongs to the ClpX chaperone family. HslU subfamily. A double ring-shaped homohexamer of HslV is capped on each side by a ring-shaped HslU homohexamer. The assembly of the HslU/HslV complex is dependent on binding of ATP.

The protein resides in the cytoplasm. In terms of biological role, ATPase subunit of a proteasome-like degradation complex; this subunit has chaperone activity. The binding of ATP and its subsequent hydrolysis by HslU are essential for unfolding of protein substrates subsequently hydrolyzed by HslV. HslU recognizes the N-terminal part of its protein substrates and unfolds these before they are guided to HslV for hydrolysis. The chain is ATP-dependent protease ATPase subunit HslU from Shewanella frigidimarina (strain NCIMB 400).